Here is a 376-residue protein sequence, read N- to C-terminus: Protein FhaE (376 aa).

The N-terminal stretch at Met1 to Ala37 is a signal peptide.

The sequence is that of Protein FhaE (fhaE) from Bordetella pertussis (strain Tohama I / ATCC BAA-589 / NCTC 13251).